We begin with the raw amino-acid sequence, 209 residues long: rRNA N(6)-adenosine-methyltransferase METTL5 (209 aa).

S-adenosyl-L-methionine is bound by residues glutamine 28, threonine 31, glycine 59, cysteine 62, valine 64, aspartate 81, and 108-109 (DV).

Belongs to the methyltransferase superfamily. PrmA family. As to quaternary structure, heterodimer; heterodimerizes with TRMT112. As to expression, ubiquitously expressed in brain.

It is found in the nucleus. The protein localises to the presynapse. Its subcellular location is the postsynapse. It carries out the reaction adenosine(1832) in 18S rRNA + S-adenosyl-L-methionine = N(6)-methyladenosine(1832) in 18S rRNA + S-adenosyl-L-homocysteine + H(+). RRNA N6-adenosine-methyltransferase activity is inhibited by zinc. Functionally, catalytic subunit of a heterodimer with TRMT112, which specifically methylates the 6th position of adenine in position 1832 of 18S rRNA. N6-methylation of adenine(1832) in 18S rRNA resides in the decoding center of 18S rRNA and is required for translation and embryonic stem cells (ESCs) pluripotency and differentiation. This chain is rRNA N(6)-adenosine-methyltransferase METTL5, found in Mus musculus (Mouse).